Reading from the N-terminus, the 40-residue chain is uncharacterized protein (40 aa).

This is an uncharacterized protein from Saccharomyces cerevisiae (strain ATCC 204508 / S288c) (Baker's yeast).